The primary structure comprises 481 residues: NADH-quinone oxidoreductase subunit N (481 aa).

Helical transmembrane passes span 11–31 (AIPE…DLFW), 38–58 (LAAV…VFEM), 69–89 (FVLD…VLMV), 107–127 (VFVL…GGSL), 128–148 (LSVY…VAFY), 162–182 (FVLG…LYGL), 203–223 (LVLV…LGAA), 237–257 (PTVV…ALII), 271–291 (WQQI…VIAI), 299–319 (MLAY…VAGT), 327–347 (FFYT…ILLV), 370–390 (YAFL…TVGF), 401–421 (VAAG…IGAF), and 457–477 (LALL…FYAM).

It belongs to the complex I subunit 2 family. NDH-1 is composed of 14 different subunits. Subunits NuoA, H, J, K, L, M, N constitute the membrane sector of the complex.

The protein localises to the cell inner membrane. The catalysed reaction is a quinone + NADH + 5 H(+)(in) = a quinol + NAD(+) + 4 H(+)(out). Functionally, NDH-1 shuttles electrons from NADH, via FMN and iron-sulfur (Fe-S) centers, to quinones in the respiratory chain. The immediate electron acceptor for the enzyme in this species is believed to be ubiquinone. Couples the redox reaction to proton translocation (for every two electrons transferred, four hydrogen ions are translocated across the cytoplasmic membrane), and thus conserves the redox energy in a proton gradient. This Acidithiobacillus ferrooxidans (strain ATCC 23270 / DSM 14882 / CIP 104768 / NCIMB 8455) (Ferrobacillus ferrooxidans (strain ATCC 23270)) protein is NADH-quinone oxidoreductase subunit N.